Consider the following 619-residue polypeptide: MINKKRLLLSTVSIMVISGWNQASAAVESQDSLVVTASRFKQPISSILAPYTVVTRDEIDRWQSNSVADILRRLPGVDIARHGGIGQLSSLFIRGTHASHVLVLMDGIRLNQAGISGSSDLSQIPVSLVQKIEYIRGPRSAVYGSDAIGGVINIITTREKLGTSLNVGIGSHGYQTYDGATQQTLAENTVLTAAANYTYTKGYDVVADGNTGGFRQPDRDGFMSKMLWLGVDQKFNEQVSGFVRAYGYNNRTSYDADINWSYPYARPDTRELYSRHYDMGVRFNQGIYSSQLITSYSHTKDYNFDPQYGRYDKSASLNDSEQYNLQWGNTFQLYQGIVSTGVDFQKQSIEAGTSYIPKSKTVRNTGMYLTAQQQLKDFILEGAIRSDKHSEAGWNTTWQASLGWEFIKDYRLIASYGTAFKAPTLSQMYGFGGNHDLKPEESKQWEGGIEGVTGQLTWRMTVYRNEIEQLIDYANSRYYNIGKAKIKGVEWTGLIDTGMFQHQLTIQYIDPRNSETNEILVRRAKQQVKYQLDWQLYDFDWGLTYQYLGRRYDKDFSTSPAKRVKLGGVSFWDLTVSYPVTSYLTIRARIANLLDKDYETVYGYRIPGREYYLTGSYNF.

The signal sequence occupies residues Met-1–Ala-25. The TonB box signature appears at Asp-31–Ser-38. The TBDR plug domain maps to Pro-43–Thr-157. Cyanocob(III)alamin contacts are provided by residues Leu-88, Ser-90, and Ile-115–Ser-116. Residues Lys-160–Phe-619 form the TBDR beta-barrel domain. The next 3 membrane-spanning stretches (beta stranded) occupy residues Thr-163 to Gly-170, Tyr-174 to Gln-183, and Thr-189 to Thr-200. Positions 204, 216, 218, and 220 each coordinate Ca(2+). A run of 2 beta stranded transmembrane segments spans residues Phe-222–Asp-232 and Glu-237–Ser-253. Ca(2+) is bound by residues Tyr-254 and Asp-255. Cyanocob(III)alamin is bound at residue Ala-256. Asp-268 contributes to the Ca(2+) binding site. Beta stranded transmembrane passes span Arg-270 to Asn-284, Gly-286 to Asn-303, Ser-316 to Gln-332, Gln-335 to Phe-344, Lys-360 to Lys-376, Phe-378 to Lys-388, Ala-392 to Ile-407, Tyr-410 to Thr-424, Glu-441 to Glu-450, Leu-456 to Asn-465, Tyr-478 to Ile-495, Met-499 to Ser-514, Arg-522 to Trp-534, Asp-540 to Phe-556, Arg-563 to Ser-577, Ile-590 to Val-601, and Pro-607 to Phe-619. Ser-316 serves as a coordination point for cyanocob(III)alamin. Arg-522 serves as a coordination point for cyanocob(III)alamin. The TonB C-terminal box motif lies at Tyr-602 to Phe-619.

The protein belongs to the TonB-dependent receptor family. BtuB (TC 1.B.14.3.1) subfamily.

Its subcellular location is the cell outer membrane. In terms of biological role, involved in the active translocation of vitamin B12 (cyanocobalamin) across the outer membrane to the periplasmic space. It derives its energy for transport by interacting with the trans-periplasmic membrane protein TonB. The chain is Vitamin B12 transporter BtuB from Photorhabdus laumondii subsp. laumondii (strain DSM 15139 / CIP 105565 / TT01) (Photorhabdus luminescens subsp. laumondii).